A 174-amino-acid chain; its full sequence is Large ribosomal subunit protein uL13 (174 aa).

2 disordered regions span residues 1–22 (MAFPDTDVSPPRGGPSSPAKSP) and 153–174 (GETHPHSAQKPQVLKTQPLEVK).

This sequence belongs to the universal ribosomal protein uL13 family. Part of the 50S ribosomal subunit. Contacts proteins L3 and L20.

Functionally, this protein is one of the early assembly proteins of the 50S ribosomal subunit. Binds to the 23S rRNA. The sequence is that of Large ribosomal subunit protein uL13 (rplM) from Deinococcus radiodurans (strain ATCC 13939 / DSM 20539 / JCM 16871 / CCUG 27074 / LMG 4051 / NBRC 15346 / NCIMB 9279 / VKM B-1422 / R1).